Here is a 560-residue protein sequence, read N- to C-terminus: Aluminum-activated malate transporter 12 (560 aa).

6 helical membrane-spanning segments follow: residues 54-74 (VGLSLTLVSLLYLMEPLFKGI), 78-98 (AIWAVMTVVVVLEFSAGATLC), 104-124 (GLGTLIAGSLAFFIEFVANDS), 130-150 (AIFIGTAVFIIGAAATYIRFI), 156-176 (NYDYGVVIFLLTFNLITVSSY), and 189-209 (FYTIAVGCGICLFMSLLVFPI). Residues 386 to 421 (LHRHNNKHQNGSISNNKHHQRNSSNSGKDLNGDVSL) are disordered. Residues 407–421 (NSSNSGKDLNGDVSL) show a composition bias toward polar residues.

This sequence belongs to the aromatic acid exporter (TC 2.A.85) family. As to expression, expressed in roots, stems, leaves, flowers and pollen. Mainly detected in the roots vascular stele and in the leaves guard cells.

It is found in the cell membrane. In terms of biological role, malate-sensitive anion transporter permeable to chloride, nitrate, sulfate and malate. Involved in dark-, CO(2)-, abscisic acid- and water-deficient-induced stomatal closure. Belongs to the R-type anion channels. The sequence is that of Aluminum-activated malate transporter 12 (ALMT12) from Arabidopsis thaliana (Mouse-ear cress).